A 688-amino-acid chain; its full sequence is DNA ligase (688 aa).

Residues Asp-51–Asp-55, Ser-100–Leu-101, and Glu-129 contribute to the NAD(+) site. The active-site N6-AMP-lysine intermediate is the Lys-131. NAD(+) is bound by residues Arg-152, Glu-189, Lys-308, and Lys-332. Residues Cys-426, Cys-429, Cys-444, and Cys-450 each coordinate Zn(2+). The BRCT domain maps to Ala-609–Ser-688.

Belongs to the NAD-dependent DNA ligase family. LigA subfamily. Mg(2+) serves as cofactor. It depends on Mn(2+) as a cofactor.

The enzyme catalyses NAD(+) + (deoxyribonucleotide)n-3'-hydroxyl + 5'-phospho-(deoxyribonucleotide)m = (deoxyribonucleotide)n+m + AMP + beta-nicotinamide D-nucleotide.. DNA ligase that catalyzes the formation of phosphodiester linkages between 5'-phosphoryl and 3'-hydroxyl groups in double-stranded DNA using NAD as a coenzyme and as the energy source for the reaction. It is essential for DNA replication and repair of damaged DNA. In Shewanella sp. (strain MR-7), this protein is DNA ligase.